The sequence spans 653 residues: Poly [ADP-ribose] polymerase 2 (653 aa).

Positions 2-36 (SARLRVADVRAELQRRGLDVSGTKPALVRRLDAAI) constitute an SAP 1 domain. The disordered stretch occupies residues 64-84 (NCGNNKRKRSGDGGEEGNGDT). Residues 69 to 72 (KRKR) carry the Nuclear localization signal motif. The region spanning 91 to 125 (LEGMSYRELQGLAKARGVAANGGKKDVIQRLLSAT) is the SAP 2 domain. The WGR domain maps to 179-276 (NYHVLQVGDE…KNFKCYAKKY (98 aa)). The PARP alpha-helical domain occupies 301–419 (ETKLETRIAQ…EIEIATKLLE (119 aa)). One can recognise a PARP catalytic domain in the interval 427 to 653 (DPLYARYKQL…LHVNFNFKRR (227 aa)).

The protein belongs to the ARTD/PARP family.

It is found in the nucleus. It catalyses the reaction NAD(+) + (ADP-D-ribosyl)n-acceptor = nicotinamide + (ADP-D-ribosyl)n+1-acceptor + H(+).. The enzyme catalyses L-aspartyl-[protein] + NAD(+) = 4-O-(ADP-D-ribosyl)-L-aspartyl-[protein] + nicotinamide. The catalysed reaction is L-glutamyl-[protein] + NAD(+) = 5-O-(ADP-D-ribosyl)-L-glutamyl-[protein] + nicotinamide. Involved in the base excision repair (BER) pathway, by catalyzing the poly(ADP-ribosyl)ation of a limited number of acceptor proteins involved in chromatin architecture and in DNA metabolism. This modification follows DNA damages and appears as an obligatory step in a detection/signaling pathway leading to the reparation of DNA strand breaks. The sequence is that of Poly [ADP-ribose] polymerase 2 (PARP2) from Zea mays (Maize).